The following is a 108-amino-acid chain: Anthranilate 1,2-dioxygenase ferredoxin subunit (108 aa).

Residues Trp-9 to Val-105 enclose the Rieske domain. 4 residues coordinate [2Fe-2S] cluster: Cys-49, His-51, Cys-68, and His-71.

This sequence belongs to the bacterial ring-hydroxylating dioxygenase ferredoxin component family. Part of a multicomponent enzyme system composed of a reductase (AndAa), a ferredoxin (AndAb) and a two-subunit oxygenase component (AndAc and AndAd). [2Fe-2S] cluster is required as a cofactor.

It functions in the pathway aromatic compound metabolism; anthranilate degradation via hydroxylation; catechol from anthranilate: step 1/1. Its function is as follows. Part of the multicomponent anthranilate dioxygenase, that converts anthranilate to catechol. This protein seems to be a 2Fe-2S ferredoxin. This is Anthranilate 1,2-dioxygenase ferredoxin subunit from Burkholderia cepacia (Pseudomonas cepacia).